Here is a 614-residue protein sequence, read N- to C-terminus: Chaperone protein DnaK (614 aa).

The residue at position 173 (threonine 173) is a Phosphothreonine; by autocatalysis. 2 stretches are compositionally biased toward basic and acidic residues: residues 490 to 509 (EENA…RNEA) and 529 to 542 (EEDK…KEAL). Disordered stretches follow at residues 490–510 (EENA…NEAD), 524–555 (GENI…DDIK), and 575–614 (QAAQ…DNQK). The span at 575-584 (QAAQAQQQAQ) shows a compositional bias: low complexity. Residues 599-614 (ADFKEVKDDDNQDNQK) are compositionally biased toward basic and acidic residues.

Belongs to the heat shock protein 70 family.

Its function is as follows. Acts as a chaperone. The protein is Chaperone protein DnaK of Staphylococcus saprophyticus subsp. saprophyticus (strain ATCC 15305 / DSM 20229 / NCIMB 8711 / NCTC 7292 / S-41).